The primary structure comprises 230 residues: 5'-methylthioadenosine/S-adenosylhomocysteine nucleosidase (230 aa).

The Proton acceptor role is filled by E12. Residues G78, I153, and 174–175 each bind substrate; that span reads ME. D198 functions as the Proton donor in the catalytic mechanism.

This sequence belongs to the PNP/UDP phosphorylase family. MtnN subfamily.

It carries out the reaction S-adenosyl-L-homocysteine + H2O = S-(5-deoxy-D-ribos-5-yl)-L-homocysteine + adenine. The enzyme catalyses S-methyl-5'-thioadenosine + H2O = 5-(methylsulfanyl)-D-ribose + adenine. It catalyses the reaction 5'-deoxyadenosine + H2O = 5-deoxy-D-ribose + adenine. It functions in the pathway amino-acid biosynthesis; L-methionine biosynthesis via salvage pathway; S-methyl-5-thio-alpha-D-ribose 1-phosphate from S-methyl-5'-thioadenosine (hydrolase route): step 1/2. Catalyzes the irreversible cleavage of the glycosidic bond in both 5'-methylthioadenosine (MTA) and S-adenosylhomocysteine (SAH/AdoHcy) to adenine and the corresponding thioribose, 5'-methylthioribose and S-ribosylhomocysteine, respectively. Also cleaves 5'-deoxyadenosine, a toxic by-product of radical S-adenosylmethionine (SAM) enzymes, into 5-deoxyribose and adenine. The protein is 5'-methylthioadenosine/S-adenosylhomocysteine nucleosidase of Shewanella piezotolerans (strain WP3 / JCM 13877).